Consider the following 115-residue polypeptide: ATP synthase subunits region ORF 7 (115 aa).

In Fuscovulum blasticum (Rhodobacter blasticus), this protein is ATP synthase subunits region ORF 7.